The chain runs to 554 residues: Wee1-like protein kinase 2-C (554 aa).

2 disordered regions span residues Met-1 to Cys-86 and Thr-145 to Lys-183. Composition is skewed to polar residues over residues Ser-38–Cys-48 and Val-147–Gln-163. Positions Phe-213–Val-487 constitute a Protein kinase domain. Residues Ile-219–Val-227 and Lys-242 each bind ATP. Asp-340 serves as the catalytic Proton acceptor. Positions 345 and 377 each coordinate Mg(2+). Residues Ala-490–Leu-516 adopt a coiled-coil conformation.

The protein belongs to the protein kinase superfamily. Ser/Thr protein kinase family. WEE1 subfamily.

It is found in the nucleus. It catalyses the reaction L-tyrosyl-[protein] + ATP = O-phospho-L-tyrosyl-[protein] + ADP + H(+). Functionally, protein tyrosine kinase that phosphorylates and inhibits cdk1 and acts as a regulator of meiosis in oocytes. Required to ensure the meiotic cell cycle in oocytes by phosphorylating cdk1 at 'Tyr-15', leading to inhibit cdk1 activity and prevent meiosis. This is Wee1-like protein kinase 2-C (wee2-c) from Xenopus laevis (African clawed frog).